The sequence spans 919 residues: Probable dipeptidyl-aminopeptidase B (919 aa).

The span at 1–10 shows a compositional bias: basic and acidic residues; it reads MRPSDDHGET. The segment at 1–50 is disordered; sequence MRPSDDHGETSEFLPITRSRSVSAASQTSTDSSLSTESLFPGEQKPFPNV. Over 1-92 the chain is Cytoplasmic; sequence MRPSDDHGET…AATGGGRARR (92 aa). The span at 21–38 shows a compositional bias: low complexity; sequence SVSAASQTSTDSSLSTES. Residues 93–113 form a helical; Signal-anchor for type II membrane protein membrane-spanning segment; it reads IFWILVLLCLGGWLLAFALFL. Residues 114-919 are Vacuolar-facing; sequence TGGRANYQTA…MKRSLPLLYP (806 aa). 3 N-linked (GlcNAc...) asparagine glycosylation sites follow: Asn-200, Asn-352, and Asn-643. The active-site Charge relay system is the Ser-757. Asn-811 carries an N-linked (GlcNAc...) asparagine glycan. Catalysis depends on charge relay system residues Asp-834 and His-867.

It belongs to the peptidase S9B family.

The protein resides in the vacuole membrane. It carries out the reaction Release of an N-terminal dipeptide, Xaa-Yaa-|-Zaa-, from a polypeptide, preferentially when Yaa is Pro, provided Zaa is neither Pro nor hydroxyproline.. Functionally, type IV dipeptidyl-peptidase which removes N-terminal dipeptides sequentially from polypeptides having unsubstituted N-termini provided that the penultimate residue is proline. The chain is Probable dipeptidyl-aminopeptidase B (dapB) from Neosartorya fischeri (strain ATCC 1020 / DSM 3700 / CBS 544.65 / FGSC A1164 / JCM 1740 / NRRL 181 / WB 181) (Aspergillus fischerianus).